The chain runs to 295 residues: Acetylglutamate kinase (295 aa).

Substrate contacts are provided by residues 66-67 (GG), Arg-88, and Asn-193.

This sequence belongs to the acetylglutamate kinase family. ArgB subfamily.

The protein localises to the cytoplasm. It catalyses the reaction N-acetyl-L-glutamate + ATP = N-acetyl-L-glutamyl 5-phosphate + ADP. The protein operates within amino-acid biosynthesis; L-arginine biosynthesis; N(2)-acetyl-L-ornithine from L-glutamate: step 2/4. Its function is as follows. Catalyzes the ATP-dependent phosphorylation of N-acetyl-L-glutamate. In Allorhizobium ampelinum (strain ATCC BAA-846 / DSM 112012 / S4) (Agrobacterium vitis (strain S4)), this protein is Acetylglutamate kinase.